A 477-amino-acid chain; its full sequence is Bifunctional protein HldE (477 aa).

Residues 1–318 form a ribokinase region; that stretch reads MKVTLPEFER…ENAVRGRAET (318 aa). Lys179 bears the N6-acetyllysine mark. 195 to 198 lines the ATP pocket; the sequence is NLSE. Residue Asp264 is part of the active site. Positions 344–477 are cytidylyltransferase; the sequence is MTNGVFDILH…IKKIQQDKKG (134 aa).

In the N-terminal section; belongs to the carbohydrate kinase PfkB family. It in the C-terminal section; belongs to the cytidylyltransferase family. In terms of assembly, homodimer.

The catalysed reaction is D-glycero-beta-D-manno-heptose 7-phosphate + ATP = D-glycero-beta-D-manno-heptose 1,7-bisphosphate + ADP + H(+). The enzyme catalyses D-glycero-beta-D-manno-heptose 1-phosphate + ATP + H(+) = ADP-D-glycero-beta-D-manno-heptose + diphosphate. It participates in nucleotide-sugar biosynthesis; ADP-L-glycero-beta-D-manno-heptose biosynthesis; ADP-L-glycero-beta-D-manno-heptose from D-glycero-beta-D-manno-heptose 7-phosphate: step 1/4. It functions in the pathway nucleotide-sugar biosynthesis; ADP-L-glycero-beta-D-manno-heptose biosynthesis; ADP-L-glycero-beta-D-manno-heptose from D-glycero-beta-D-manno-heptose 7-phosphate: step 3/4. Its function is as follows. Catalyzes the phosphorylation of D-glycero-D-manno-heptose 7-phosphate at the C-1 position to selectively form D-glycero-beta-D-manno-heptose-1,7-bisphosphate. In terms of biological role, catalyzes the ADP transfer from ATP to D-glycero-beta-D-manno-heptose 1-phosphate, yielding ADP-D-glycero-beta-D-manno-heptose. This chain is Bifunctional protein HldE, found in Shigella dysenteriae serotype 1 (strain Sd197).